Consider the following 365-residue polypeptide: GTPase Obg (365 aa).

Residues 1-159 form the Obg domain; the sequence is MKFIDEARIE…RMLKLELKVL (159 aa). In terms of domain architecture, OBG-type G spans 160-334; it reads ADVGLLGMPN…LIYAIKDHLQ (175 aa). GTP-binding positions include 166–173, 191–195, 213–216, 284–287, and 315–317; these read GMPNAGKS, FTTLH, DIPG, NKLD, and SAL. 2 residues coordinate Mg(2+): Ser173 and Thr193.

Belongs to the TRAFAC class OBG-HflX-like GTPase superfamily. OBG GTPase family. Monomer. The cofactor is Mg(2+).

It localises to the cytoplasm. Functionally, an essential GTPase which binds GTP, GDP and possibly (p)ppGpp with moderate affinity, with high nucleotide exchange rates and a fairly low GTP hydrolysis rate. Plays a role in control of the cell cycle, stress response, ribosome biogenesis and in those bacteria that undergo differentiation, in morphogenesis control. This Cupriavidus taiwanensis (strain DSM 17343 / BCRC 17206 / CCUG 44338 / CIP 107171 / LMG 19424 / R1) (Ralstonia taiwanensis (strain LMG 19424)) protein is GTPase Obg.